The primary structure comprises 421 residues: Testin (421 aa).

Residues 92–199 (MILTNPVAAK…GDVKLPRDMN (108 aa)) enclose the PET domain. 2 disordered regions span residues 133-164 (EKQP…PSKC) and 193-213 (KLPR…GGDR). Basic and acidic residues predominate over residues 155–164 (PAHDQDPSKC). LIM zinc-binding domains lie at 234–297 (YSCY…CDSE), 299–359 (PRCA…NHAV), and 362–421 (QGCH…KMMS).

It belongs to the prickle / espinas / testin family. Interacts via LIM domain 1 with ZYX. Interacts (via LIM domain 3) with ENAH and VASP. Interacts with ALKBH4, talin, actin, alpha-actinin, GRIP1 and PXN. Interacts (via LIM domain 2) with ACTL7A (via N-terminus). Heterodimer with ACTL7A; the heterodimer interacts with ENAH to form a heterotrimer.

The protein localises to the cytoplasm. It localises to the cell junction. Its subcellular location is the focal adhesion. Its function is as follows. Scaffold protein that may play a role in cell adhesion, cell spreading and in the reorganization of the actin cytoskeleton. Plays a role in the regulation of cell proliferation. May act as a tumor suppressor. This chain is Testin (TES), found in Ovis aries (Sheep).